The following is a 470-amino-acid chain: Poly(A) polymerase catalytic subunit (470 aa).

Active-site residues include Asp-192 and Asp-194.

Belongs to the poxviridae poly(A) polymerase catalytic subunit family. In terms of assembly, heterodimer of a large (catalytic) subunit and a small (regulatory) subunit.

It catalyses the reaction RNA(n) + ATP = RNA(n)-3'-adenine ribonucleotide + diphosphate. Polymerase that creates the 3'-poly(A) tail of mRNA's. In Deerpox virus (strain Mule deer/United States/W-848-83/1983) (DPV), this protein is Poly(A) polymerase catalytic subunit (PAPL).